An 837-amino-acid polypeptide reads, in one-letter code: Endo-1,4-beta-xylanase Z (837 aa).

Residues 1–28 form the signal peptide; the sequence is MSRKLFSVLLVGLMLMTSLLVTISSTSA. The CBM6 domain maps to 299-420; sequence TRIEAEDYDG…PVNIDWFTFG (122 aa). The Dockerin domain maps to 424-492; sequence SSTGLGDLNG…ILRIITEFPG (69 aa). Positions 512–833 constitute a GH10 domain; the sequence is TISGNALRDY…KPAYNAIKEA (322 aa). Glu-645 acts as the Proton donor in catalysis. Glu-754 serves as the catalytic Nucleophile. Cys-783 and Cys-789 are joined by a disulfide.

The protein belongs to the glycosyl hydrolase 10 (cellulase F) family.

The enzyme catalyses Endohydrolysis of (1-&gt;4)-beta-D-xylosidic linkages in xylans.. This chain is Endo-1,4-beta-xylanase Z (xynZ), found in Acetivibrio thermocellus (strain ATCC 27405 / DSM 1237 / JCM 9322 / NBRC 103400 / NCIMB 10682 / NRRL B-4536 / VPI 7372) (Clostridium thermocellum).